The primary structure comprises 243 residues: Venom nerve growth factor (243 aa).

The N-terminal stretch at 1–18 (MSMLCYTLIIAFLIGIWA) is a signal peptide. The propeptide occupies 19–125 (APKSEDNVPL…TLNRNIRTKR (107 aa)). The interval 45 to 66 (HEGLKTSRNTDQRHLAPKKAED) is disordered. Residues 46 to 66 (EGLKTSRNTDQRHLAPKKAED) show a composition bias toward basic and acidic residues. Intrachain disulfides connect Cys139–Cys204, Cys182–Cys232, and Cys192–Cys234. Asn148 carries N-linked (GlcNAc...) asparagine glycosylation.

It belongs to the NGF-beta family. Homodimer; non-covalently linked. In terms of tissue distribution, expressed by the venom gland.

Its subcellular location is the secreted. In terms of biological role, nerve growth factor is important for the development and maintenance of the sympathetic and sensory nervous systems. It stimulates division and differentiation of sympathetic and embryonic sensory neurons as well as basal forebrain cholinergic neurons in the brain. Its relevance in the snake venom is not clear. However, it has been shown to inhibit metalloproteinase-dependent proteolysis of platelet glycoprotein Ib alpha, suggesting a metalloproteinase inhibition to prevent metalloprotease autodigestion and/or protection against prey proteases. Binds a lipid between the two protein chains in the homodimer. The lipid-bound form promotes histamine relase from mouse mast cells, contrary to the lipid-free form. The protein is Venom nerve growth factor of Cryptophis nigrescens (Eastern small-eyed snake).